The chain runs to 448 residues: Methylenetetrahydrofolate--tRNA-(uracil-5-)-methyltransferase TrmFO (448 aa).

13 to 18 is an FAD binding site; that stretch reads GAGLAG.

The protein belongs to the MnmG family. TrmFO subfamily. The cofactor is FAD.

Its subcellular location is the cytoplasm. It catalyses the reaction uridine(54) in tRNA + (6R)-5,10-methylene-5,6,7,8-tetrahydrofolate + NADH + H(+) = 5-methyluridine(54) in tRNA + (6S)-5,6,7,8-tetrahydrofolate + NAD(+). It carries out the reaction uridine(54) in tRNA + (6R)-5,10-methylene-5,6,7,8-tetrahydrofolate + NADPH + H(+) = 5-methyluridine(54) in tRNA + (6S)-5,6,7,8-tetrahydrofolate + NADP(+). In terms of biological role, catalyzes the folate-dependent formation of 5-methyl-uridine at position 54 (M-5-U54) in all tRNAs. This chain is Methylenetetrahydrofolate--tRNA-(uracil-5-)-methyltransferase TrmFO, found in Streptococcus pyogenes serotype M12 (strain MGAS2096).